The primary structure comprises 119 residues: Putative transmembrane protein ORF119 (119 aa).

The next 3 helical transmembrane spans lie at Thr-9–Val-29, Gln-73–Thr-93, and Pro-95–Tyr-115.

The protein resides in the host membrane. This Acidianus convivator (ATV) protein is Putative transmembrane protein ORF119.